The primary structure comprises 272 residues: SKA complex subunit 1 homolog (272 aa).

Positions 48 to 75 (ALSSMELQVQSIKDRLREETEAIPKAKK) form a coiled coil.

Belongs to the SKA1 family.

This is SKA complex subunit 1 homolog from Arabidopsis thaliana (Mouse-ear cress).